Reading from the N-terminus, the 118-residue chain is Large ribosomal subunit protein bL17 (118 aa).

This sequence belongs to the bacterial ribosomal protein bL17 family. In terms of assembly, part of the 50S ribosomal subunit. Contacts protein L32.

In Phytoplasma mali (strain AT), this protein is Large ribosomal subunit protein bL17.